Consider the following 479-residue polypeptide: CBL-interacting serine/threonine-protein kinase 10 (479 aa).

The region spanning 12–266 (YDVGRLLGQG…IARIRESSWF (255 aa)) is the Protein kinase domain. Residues 18 to 26 (LGQGTFAKV) and lysine 41 contribute to the ATP site. Aspartate 134 functions as the Proton acceptor in the catalytic mechanism. Residues 152–181 (DFGLSALADCKRQDGLLHTTCGTPAYVAPE) are activation loop. Phosphoserine is present on serine 156. Threonine 170 carries the post-translational modification Phosphothreonine. Positions 286-323 (SVEAGTAGTNENGAGPSENGAGPSENGDRVTEENHTDE) are disordered. The segment covering 288-300 (EAGTAGTNENGAG) has biased composition (low complexity). The segment covering 311–323 (NGDRVTEENHTDE) has biased composition (basic and acidic residues). The NAF domain occupies 322 to 346 (DEPTNLNAFDLIALSAGFDLAGLFG). The tract at residues 350–379 (KRESRFTSQKPASVIISKLEEVAQRLKLSI) is PPI. Residues 456–479 (SQQETEYQQQQQQEQQEQEEPLKF) are disordered. A compositionally biased stretch (low complexity) spans 457–470 (QQETEYQQQQQQEQ).

Belongs to the protein kinase superfamily. CAMK Ser/Thr protein kinase family. SNF1 subfamily. In terms of assembly, interacts with CBL4/SOS3. It depends on Mn(2+) as a cofactor. Mostly expressed in roots.

It catalyses the reaction L-seryl-[protein] + ATP = O-phospho-L-seryl-[protein] + ADP + H(+). The enzyme catalyses L-threonyl-[protein] + ATP = O-phospho-L-threonyl-[protein] + ADP + H(+). Functionally, CIPK serine-threonine protein kinases interact with CBL proteins. Binding of a CBL protein to the regulatory NAF domain of CIPK protein lead to the activation of the kinase in a calcium-dependent manner. This chain is CBL-interacting serine/threonine-protein kinase 10 (CIPK10), found in Arabidopsis thaliana (Mouse-ear cress).